Here is a 590-residue protein sequence, read N- to C-terminus: Protein ecdysoneless homolog (590 aa).

A disordered region spans residues 445–464 (EDFYGVKNSDTDTDSDSLAD). Positions 455–464 (TDTDSDSLAD) are enriched in acidic residues.

Belongs to the ECD family.

It is found in the cytoplasm. The protein resides in the nucleus. In terms of biological role, involved in the regulation of carbohydrate metabolism. May act as a transcription factor. The polypeptide is Protein ecdysoneless homolog (Schizosaccharomyces pombe (strain 972 / ATCC 24843) (Fission yeast)).